Here is a 244-residue protein sequence, read N- to C-terminus: Transcriptional regulatory protein AruR (244 aa).

Residues Arg-6 to Ile-124 enclose the Response regulatory domain. The residue at position 60 (Asp-60) is a 4-aspartylphosphate. The segment at residues Gln-139–Ala-239 is a DNA-binding region (ompR/PhoB-type).

In terms of processing, phosphorylated by AruS.

The protein localises to the cytoplasm. It participates in amino-acid degradation; L-arginine degradation [regulation]. Member of the two-component regulatory system AruS/AruR, which is involved in the regulation of the arginine transaminase (ATA) pathway in response to exogeneous L-arginine. Regulates transcription of aruH and aruI. The polypeptide is Transcriptional regulatory protein AruR (aruR) (Pseudomonas aeruginosa (strain ATCC 15692 / DSM 22644 / CIP 104116 / JCM 14847 / LMG 12228 / 1C / PRS 101 / PAO1)).